Reading from the N-terminus, the 1548-residue chain is Lysine-specific demethylase 5D (1548 aa).

One can recognise a JmjN domain in the interval 14 to 55 (CPVFEPSWAEFRDPLGYIAKIRPIAEKSGICKIRPPADWQPP). One can recognise an ARID domain in the interval 79–169 (TRVKLNYLDQ…IIYPYEIFQS (91 aa)). Residues K205, K229, K244, and K279 each participate in a glycyl lysine isopeptide (Lys-Gly) (interchain with G-Cter in SUMO2) cross-link. Residues 208–229 (CYSRRGKRLQPEPEPTEEDIEK) form a disordered region. A phosphoserine mark is found at S300 and S316. The PHD-type 1 zinc finger occupies 325 to 371 (VCRICSRGDEVDKFLLCDGCSDNYHIFCLLPPLSEVPKGVWRCPKCI). Y439 serves as a coordination point for 2-oxoglutarate. The JmjC domain maps to 467 to 633 (EYAACGWNLN…VGRQCIEHYR (167 aa)). 2 residues coordinate Fe cation: H513 and E515. 2-oxoglutarate contacts are provided by S521, N523, and K531. A Fe cation-binding site is contributed by H601. The segment at 706-758 (CIKCKTTCFLSALACYDCPDSLVCLSHINDLCKCSRNRQYLRYRYTLDELPAM) adopts a C5HC2 zinc-finger fold. Residues S889 and S893 each carry the phosphoserine modification. K1123 is covalently cross-linked (Glycyl lysine isopeptide (Lys-Gly) (interchain with G-Cter in SUMO2)). The segment at 1182 to 1243 (ICICGQVCAG…DTKFLCPLCM (62 aa)) adopts a PHD-type 2 zinc-finger fold. S1355 carries the phosphoserine modification. The disordered stretch occupies residues 1438-1468 (KPENPGNWSEEQTPERRRQRRQKVVLSRKGE).

The protein belongs to the JARID1 histone demethylase family. As to quaternary structure, interacts withPCGF6, MSH5, ZMYND8, AR. L-ascorbate serves as cofactor. Requires Fe(2+) as cofactor.

Its subcellular location is the nucleus. It carries out the reaction N(6),N(6),N(6)-trimethyl-L-lysyl(4)-[histone H3] + 3 2-oxoglutarate + 3 O2 = L-lysyl(4)-[histone H3] + 3 formaldehyde + 3 succinate + 3 CO2. Its function is as follows. Histone demethylase that specifically demethylates 'Lys-4' of histone H3, thereby playing a central role in histone code. Does not demethylate histone H3 'Lys-9', H3 'Lys-27', H3 'Lys-36', H3 'Lys-79' or H4 'Lys-20'. Demethylates trimethylated and dimethylated but not monomethylated H3 'Lys-4'. May play a role in spermatogenesis. Involved in transcriptional repression of diverse metastasis-associated genes; in this function seems to cooperate with ZMYND8. Suppresses prostate cancer cell invasion. Regulates androgen receptor (AR) transcriptional activity by demethylating H3K4me3 active transcription marks. The sequence is that of Lysine-specific demethylase 5D (Kdm5d) from Mus musculus (Mouse).